A 288-amino-acid polypeptide reads, in one-letter code: General transcription factor IIE subunit 2 (288 aa).

The disordered stretch occupies residues alanine 16 to asparagine 56. Positions glutamate 41–asparagine 56 are enriched in low complexity. Positions serine 63–lysine 143 form a DNA-binding region, TFIIE beta.

Belongs to the TFIIE beta subunit family. As to quaternary structure, tetramer of two alpha and two beta chains.

It localises to the nucleus. Functionally, recruits TFIIH to the initiation complex and stimulates the RNA polymerase II C-terminal domain kinase and DNA-dependent ATPase activities of TFIIH. Both TFIIH and TFIIE are required for promoter clearance by RNA polymerase. This is General transcription factor IIE subunit 2 (gtf2e2) from Xenopus laevis (African clawed frog).